We begin with the raw amino-acid sequence, 299 residues long: F-actin-capping protein subunit alpha-3 (299 aa).

A phosphoserine mark is found at S2 and S290.

This sequence belongs to the F-actin-capping protein alpha subunit family. In terms of assembly, component of the F-actin capping complex, composed of a heterodimer of an alpha and a beta subunit. Component of the WASH complex, composed of F-actin-capping protein subunit alpha (CAPZA1, CAPZA2 or CAPZA3), F-actin-capping protein subunit beta (CAPZB), WASHC1, WASHC2, WASHC3, WASHC4 and WASHC5. Exclusively expressed in the testis.

It is found in the cytoplasm. The protein resides in the cytoskeleton. F-actin-capping proteins bind in a Ca(2+)-independent manner to the fast growing ends of actin filaments (barbed end) thereby blocking the exchange of subunits at these ends. Unlike other capping proteins (such as gelsolin and severin), these proteins do not sever actin filaments. May play a role in the morphogenesis of spermatid. The protein is F-actin-capping protein subunit alpha-3 (Capza3) of Rattus norvegicus (Rat).